Reading from the N-terminus, the 566-residue chain is UvrABC system protein C (566 aa).

In terms of domain architecture, GIY-YIG spans 16 to 93 (EKPGVYLFKK…IQQYKPRYNV (78 aa)). A UVR domain is found at 199 to 234 (AEVLPKLYEKIEEFSKELMFEKCAHIRDQIIALENL).

It belongs to the UvrC family. Interacts with UvrB in an incision complex.

It is found in the cytoplasm. Its function is as follows. The UvrABC repair system catalyzes the recognition and processing of DNA lesions. UvrC both incises the 5' and 3' sides of the lesion. The N-terminal half is responsible for the 3' incision and the C-terminal half is responsible for the 5' incision. In Aquifex aeolicus (strain VF5), this protein is UvrABC system protein C.